An 818-amino-acid polypeptide reads, in one-letter code: Fibrous sheath CABYR-binding protein (818 aa).

Residues 1–61 form a disordered region; the sequence is MEEKDESEQS…PKAALSIGNI (61 aa). Phosphoserine occurs at positions 25, 57, and 182. 2 disordered regions span residues 195-727 and 773-805; these read SFSK…PFIT and LESGNLDDKPKSEEPLERDTIPKDSSGTKNEGV. Low complexity-rich tracts occupy residues 490–511, 544–560, and 697–715; these read SPPAEEVPAGEPPEVQSPPAEE, EAPAGEPSEVQSPPAEE, and AELQPPSTEETTSEMVSVE. The span at 773–794 shows a compositional bias: basic and acidic residues; sequence LESGNLDDKPKSEEPLERDTIP.

Interacts with CABYR. Interacts with ROPN1 and ROPN1L; the interaction increases upon spermatozoa capacitation conditions. In terms of processing, phosphorylated by PKA upon spermatozoa capacitation conditions.

The protein resides in the cell projection. The protein localises to the cilium. Its subcellular location is the flagellum. Functionally, may be involved in the later stages of fibrous sheath biogenesis and spermatozoa capacitation. Inhibits ROPN1 and ROPN1L SUMOylation. Binds calcium. This is Fibrous sheath CABYR-binding protein from Bos taurus (Bovine).